A 417-amino-acid polypeptide reads, in one-letter code: Probable serine/threonine-protein kinase WNK9 (417 aa).

Positions 1–23 (MDLVEAEAEEQPPDEDGDEEGYV) are disordered. Residues 32–289 (IRYDEIVGSG…ATELLKSSFL (258 aa)) enclose the Protein kinase domain. Residues 113–116 (TELF) and Lys163 each bind ATP. Residue Asp180 is the Proton acceptor of the active site.

The protein belongs to the protein kinase superfamily. Ser/Thr protein kinase family. WNK subfamily.

The catalysed reaction is L-seryl-[protein] + ATP = O-phospho-L-seryl-[protein] + ADP + H(+). The enzyme catalyses L-threonyl-[protein] + ATP = O-phospho-L-threonyl-[protein] + ADP + H(+). This Oryza sativa subsp. japonica (Rice) protein is Probable serine/threonine-protein kinase WNK9 (WNK9).